A 232-amino-acid chain; its full sequence is Large ribosomal subunit protein uL1 (232 aa).

This sequence belongs to the universal ribosomal protein uL1 family. As to quaternary structure, part of the 50S ribosomal subunit.

Binds directly to 23S rRNA. The L1 stalk is quite mobile in the ribosome, and is involved in E site tRNA release. Functionally, protein L1 is also a translational repressor protein, it controls the translation of the L11 operon by binding to its mRNA. In Cutibacterium acnes (strain DSM 16379 / KPA171202) (Propionibacterium acnes), this protein is Large ribosomal subunit protein uL1.